Here is a 924-residue protein sequence, read N- to C-terminus: MAVKSLVFRRKFPLLVTGSLLALQPVAALTVQAADQFDCKVSATGGWDCSPLQNANANLPPRPAHTATSVSTAAAGSSVSGSGGETVEAEPTQRLVTESGGRALRSRSADYSHLDWIPREKLTAAQLAEIGPYCGGSYIEPVRPGMDDGAPSDESPTYVSAKASRYEQEKQIATLAGDVVLRQGSMQVEGDEANLHQLENRGELVGNVKLRDKGMLVVGDHAQVQLDNGEAQVDNAEYVIHKAHARGSALYAKRSENAIIMLKDGTYTRCEPSSNAWTLKGNNVKLNPATGFGTATNATLRVKDFPVFYTPYIYFPIDDRRQSGFLPPSFSSTSDTGFTLVTPYYFNLAPNYDATLYPRYMAKRGMMLEGEFRYLTHSSEGIVNAAYLNDKDDHREGFPDYSKDRWLYGLKNTTGLDSRWLAEVDYTRISDPYYFQDLDTDLGVGSTTYVNQRGTLTYRGDTFTGRLNAQAYQLATTTDVTPYDRLPQITFDGFLPYNPGGMQFTYGTEFVRFDRDLDENIYFNDDGSIRGKRPDASLQGLARATGDRMHLEPGMSLPMTRSWGYVTPTLKYLYTKYDLDLDSQGKTDLNKRDESFDSNQDRSLPLVKVDSGLYFDRDTTFAGTPFRQTLEPRAMYLYVPYKDQDSLPVFDTSEPSFSYDSLWRENRFTGKDRIGDANQLSLGVTSRFIEENGFERASISAGQIYYFRDRRVQLPGLTEKDLKRLNLDPSGLDNDSWRSPYAFAGQYRFNRDWRINSDFNWNPNTSRTESGSAIFHYQPEVDPGKVVNVGYRYRADARRFDSSRGTFRYGNEDDIIKQHDFSVIWPLVPQWSVLARWQYDYNKNRTLEAFGGFEYDSCCWKLRLINRYWLDVDDDAFLVQSEKADRGIFLQIVLKGLGGIVGNKTEMFLDKGIQGYRQREDQAM.

Positions 1–33 (MAVKSLVFRRKFPLLVTGSLLALQPVAALTVQA) are cleaved as a signal peptide. Positions 58-102 (NLPPRPAHTATSVSTAAAGSSVSGSGGETVEAEPTQRLVTESGGR) are disordered. Over residues 66 to 90 (TATSVSTAAAGSSVSGSGGETVEAE) the composition is skewed to low complexity.

The protein belongs to the LptD family. Component of the lipopolysaccharide transport and assembly complex. Interacts with LptE and LptA.

The protein resides in the cell outer membrane. Its function is as follows. Together with LptE, is involved in the assembly of lipopolysaccharide (LPS) at the surface of the outer membrane. This is LPS-assembly protein LptD from Pseudomonas aeruginosa (strain UCBPP-PA14).